A 30-amino-acid polypeptide reads, in one-letter code: RCAHGTYYSNDSQQCLLNCCWWGGGDHCCR.

Post-translationally, contains 3 disulfide bonds. Expressed by the venom duct.

The protein resides in the secreted. In Conus betulinus (Beech cone), this protein is Conotoxin Bt12.1.